A 553-amino-acid polypeptide reads, in one-letter code: Arginine--tRNA ligase (553 aa).

The 'HIGH' region signature appears at 130–140 (ANPTGDLHIGH).

The protein belongs to the class-I aminoacyl-tRNA synthetase family. As to quaternary structure, monomer.

Its subcellular location is the cytoplasm. It carries out the reaction tRNA(Arg) + L-arginine + ATP = L-arginyl-tRNA(Arg) + AMP + diphosphate. In Staphylococcus epidermidis (strain ATCC 35984 / DSM 28319 / BCRC 17069 / CCUG 31568 / BM 3577 / RP62A), this protein is Arginine--tRNA ligase.